Consider the following 394-residue polypeptide: Mannosyl-3-phosphoglycerate synthase (394 aa).

The protein belongs to the glycosyltransferase 2 family. Mg(2+) is required as a cofactor.

Its subcellular location is the cytoplasm. It catalyses the reaction (2R)-3-phosphoglycerate + GDP-alpha-D-mannose = 2-O-(alpha-D-mannosyl)-3-phosphoglycerate + GDP + H(+). Its pathway is carbohydrate biosynthesis; 2-(alpha-D-mannosyl)-D-glycerate biosynthesis; 2-(alpha-D-mannosyl)-D-glycerate from GDP-alpha-D-mannose (MPG route): step 1/2. Its function is as follows. Transfers a mannosyl group from GDP-mannose to phosphoglycerate to form mannosyl-3-phosphoglycerate (MPG). The enzyme is absolutely specific for GDP-mannose and 3-phosphoglycerate, and transfers the mannosyl group with retention of configuration. The polypeptide is Mannosyl-3-phosphoglycerate synthase (mngA) (Pyrococcus horikoshii (strain ATCC 700860 / DSM 12428 / JCM 9974 / NBRC 100139 / OT-3)).